Reading from the N-terminus, the 479-residue chain is Glycogen synthase (479 aa).

Lys15 is a binding site for ADP-alpha-D-glucose.

This sequence belongs to the glycosyltransferase 1 family. Bacterial/plant glycogen synthase subfamily.

It catalyses the reaction [(1-&gt;4)-alpha-D-glucosyl](n) + ADP-alpha-D-glucose = [(1-&gt;4)-alpha-D-glucosyl](n+1) + ADP + H(+). Its pathway is glycan biosynthesis; glycogen biosynthesis. Functionally, synthesizes alpha-1,4-glucan chains using ADP-glucose. The protein is Glycogen synthase of Roseobacter denitrificans (strain ATCC 33942 / OCh 114) (Erythrobacter sp. (strain OCh 114)).